The following is a 245-amino-acid chain: Acetylglutamate kinase (245 aa).

Residues 41–42, Arg63, and Asn156 each bind substrate; that span reads GG.

This sequence belongs to the acetylglutamate kinase family. ArgB subfamily.

The protein resides in the cytoplasm. It carries out the reaction N-acetyl-L-glutamate + ATP = N-acetyl-L-glutamyl 5-phosphate + ADP. It participates in amino-acid biosynthesis; L-arginine biosynthesis; N(2)-acetyl-L-ornithine from L-glutamate: step 2/4. Catalyzes the ATP-dependent phosphorylation of N-acetyl-L-glutamate. The chain is Acetylglutamate kinase from Staphylococcus epidermidis (strain ATCC 35984 / DSM 28319 / BCRC 17069 / CCUG 31568 / BM 3577 / RP62A).